The following is a 400-amino-acid chain: Malonyl CoA-acyl carrier protein transacylase (400 aa).

Residues Ser-92 and His-201 contribute to the active site.

The protein belongs to the FabD family.

It catalyses the reaction holo-[ACP] + malonyl-CoA = malonyl-[ACP] + CoA. Its function is as follows. Is involved in the mycosubtilin synthetase assembly, by catalyzing the transfer of malonyl groups to a specific acyl-carrier-protein domain on MycA. This Bacillus subtilis protein is Malonyl CoA-acyl carrier protein transacylase (fenF).